The following is a 163-amino-acid chain: Disulfide bond formation protein B (163 aa).

Over 1 to 9 (MKKLTYRKI) the chain is Cytoplasmic. Residues 10 to 26 (QSFQAIITVLVIFASFY) traverse the membrane as a helical segment. The Periplasmic segment spans residues 27–44 (LEYAAGLQPCPLCLMQRV). Residues Cys36 and Cys39 are joined by a disulfide bond. Residues 45-58 (CVFILLGLMGVSLG) traverse the membrane as a helical segment. Over 59–64 (TVKKAH) the chain is Cytoplasmic. The chain crosses the membrane as a helical span at residues 65–82 (IVSLIQFQVACAGLYFSL). At 83 to 139 (RQLWLQSLPSDQAPACMPGLDVLIQYFPWQTVAKALFWGAGDCAEVTWTMFGVSMPG) the chain is on the periplasmic side. Cysteines 98 and 125 form a disulfide. The helical transmembrane segment at 140 to 158 (WAAMYFLSMAIMGLFLFFR) threads the bilayer. Residues 159–163 (TRTIN) lie on the Cytoplasmic side of the membrane.

It belongs to the DsbB family.

The protein localises to the cell inner membrane. Its function is as follows. Required for disulfide bond formation in some periplasmic proteins. Acts by oxidizing the DsbA protein. The sequence is that of Disulfide bond formation protein B from Legionella pneumophila (strain Lens).